Here is a 547-residue protein sequence, read N- to C-terminus: Threonylcarbamoyladenosine tRNA methylthiotransferase (547 aa).

Positions 30-51 (ARKSVVPRARKHKQETGEQMQT) are disordered. Residues 59-167 (QKVWLKTWGC…VVEVVDEAIK (109 aa)) enclose the MTTase N-terminal domain. Positions 68, 104, 133, 209, 213, and 216 each coordinate [4Fe-4S] cluster. The Radical SAM core domain maps to 195-426 (RKNPLIEIIS…ALFHSYRPYD (232 aa)). The region spanning 426–488 (DHKMGEQQQV…KHYMKGRPLE (63 aa)) is the TRAM domain. Residues 527–547 (ILAVVLLLSAVLLALLMEKLL) form a helical membrane-spanning segment.

Belongs to the methylthiotransferase family. CDKAL1 subfamily. [4Fe-4S] cluster serves as cofactor.

The protein localises to the endoplasmic reticulum membrane. The catalysed reaction is N(6)-L-threonylcarbamoyladenosine(37) in tRNA + (sulfur carrier)-SH + AH2 + 2 S-adenosyl-L-methionine = 2-methylsulfanyl-N(6)-L-threonylcarbamoyladenosine(37) in tRNA + (sulfur carrier)-H + 5'-deoxyadenosine + L-methionine + A + S-adenosyl-L-homocysteine + 2 H(+). In terms of biological role, catalyzes the methylthiolation of N6-threonylcarbamoyladenosine (t(6)A), leading to the formation of 2-methylthio-N6-threonylcarbamoyladenosine (ms(2)t(6)A) at position 37 in tRNAs that read codons beginning with adenine. This chain is Threonylcarbamoyladenosine tRNA methylthiotransferase (cdkal1), found in Danio rerio (Zebrafish).